Consider the following 86-residue polypeptide: MKQTMDKPKRSFRRHLTPIRRHLSPIGSGDRIDYKNMSLISRFISEQGKILSGRVNRLTSKQQRLMTNAIKRARILSLLPFLYNEN.

This sequence belongs to the bacterial ribosomal protein bS18 family. In terms of assembly, part of the 30S ribosomal subunit.

Its subcellular location is the plastid. It localises to the chloroplast. This Larix laricina (Tamarack) protein is Small ribosomal subunit protein bS18c.